The sequence spans 147 residues: Myoglobin (147 aa).

Position 2 is an N-acetylalanine (Ala-2). A Globin domain is found at 2–141 (ADFDAVLKCW…IIADLEANYK (140 aa)). His-60 contacts nitrite. His-60 contacts O2. Residue His-89 coordinates heme b.

This sequence belongs to the globin family. Monomeric.

The protein resides in the cytoplasm. It is found in the sarcoplasm. The enzyme catalyses Fe(III)-heme b-[protein] + nitric oxide + H2O = Fe(II)-heme b-[protein] + nitrite + 2 H(+). It catalyses the reaction H2O2 + AH2 = A + 2 H2O. In terms of biological role, monomeric heme protein which primary function is to store oxygen and facilitate its diffusion within muscle tissues. Reversibly binds oxygen through a pentacoordinated heme iron and enables its timely and efficient release as needed during periods of heightened demand. Depending on the oxidative conditions of tissues and cells, and in addition to its ability to bind oxygen, it also has a nitrite reductase activity whereby it regulates the production of bioactive nitric oxide. Under stress conditions, like hypoxia and anoxia, it also protects cells against reactive oxygen species thanks to its pseudoperoxidase activity. In Thunnus albacares (Yellowfin tuna), this protein is Myoglobin (mb).